A 34-amino-acid chain; its full sequence is Aspartate aminotransferase 2 (34 aa).

It belongs to the class-I pyridoxal-phosphate-dependent aminotransferase family. As to quaternary structure, homodimer. Pyridoxal 5'-phosphate is required as a cofactor.

The catalysed reaction is L-aspartate + 2-oxoglutarate = oxaloacetate + L-glutamate. Its function is as follows. Important for the metabolism of amino acids and Krebs-cycle related organic acids. In plants, it is involved in nitrogen metabolism and in aspects of carbon and energy metabolism. The polypeptide is Aspartate aminotransferase 2 (Pseudotsuga menziesii (Douglas-fir)).